The following is a 117-amino-acid chain: Large ribosomal subunit protein bL19 (117 aa).

This sequence belongs to the bacterial ribosomal protein bL19 family.

Its function is as follows. This protein is located at the 30S-50S ribosomal subunit interface and may play a role in the structure and function of the aminoacyl-tRNA binding site. The sequence is that of Large ribosomal subunit protein bL19 from Kineococcus radiotolerans (strain ATCC BAA-149 / DSM 14245 / SRS30216).